The chain runs to 546 residues: MTINQLIVIGGGIAGLTCAESYSHLKPNDKVTILSCSPILKTVCNVQKISKVLESFEVFETQFTDIEFKNPNISVIICDVDSIDINNRIVKTDKGNFKYDYLSICSGAKPNLVKESPYLIGIRDTETIVDLKNRLSNAKRIVIVGNGGIALELIHEIKNCQIIWSIKDKHIGNAFFDKDAADFLFRSKQIIDDDNHDKKNVVKEQQQQQQKDGILLNEDELIAKNQNISSQSNSSLYKSESGSALGPQWYSKYNFKTTDQYNKNNQEKKYNFNENVNIQYSTFLDEIYSNHDKKLNQEIINNNNNGDGDDKEDWPIYVKLSNGNLFGCNFIISATGVIPNSTILTKDNNNNNNNKIIKLSNEGAIIVDEQMKTSVDRIYSAGDVCSIEWSESEVWFQMRLWSQARTQGRYTAQCIANESVKNTPQQDNLDQICTNFEFELFAHATKFFGFKVIMLGLYNAQGLNLNLDNNNQNEENQDNIKIYTREIIGEQYVKVILKNGRLIGSLLIGDTDLEETFENLILNQIDLSGYGAEILNPEIDIEDYFD.

Belongs to the class-I pyridine nucleotide-disulfide oxidoreductase family. PYROXD1 subfamily. The cofactor is FAD.

This Dictyostelium discoideum (Social amoeba) protein is Pyridine nucleotide-disulfide oxidoreductase domain-containing protein 1 (pyroxd1).